The sequence spans 732 residues: uncharacterized protein (732 aa).

2 consecutive transmembrane segments (helical) span residues 687-707 and 712-732; these read YLFP…GSDL and GVKV…YYTS.

Belongs to the FadG family.

It is found in the cell membrane. This is an uncharacterized protein from Bacillus subtilis (strain 168).